The chain runs to 523 residues: 2-isopropylmalate synthase (523 aa).

In terms of domain architecture, Pyruvate carboxyltransferase spans 5-267; that stretch reads VIIFDTTLRD…ETGINAKEIH (263 aa). Asp-14, His-202, His-204, and Asn-238 together coordinate Mn(2+). The regulatory domain stretch occupies residues 392 to 523; it reads GLQQLVVHSD…KQARTELGGV (132 aa).

It belongs to the alpha-IPM synthase/homocitrate synthase family. LeuA type 1 subfamily. Homodimer. The cofactor is Mn(2+).

Its subcellular location is the cytoplasm. It carries out the reaction 3-methyl-2-oxobutanoate + acetyl-CoA + H2O = (2S)-2-isopropylmalate + CoA + H(+). It functions in the pathway amino-acid biosynthesis; L-leucine biosynthesis; L-leucine from 3-methyl-2-oxobutanoate: step 1/4. In terms of biological role, catalyzes the condensation of the acetyl group of acetyl-CoA with 3-methyl-2-oxobutanoate (2-ketoisovalerate) to form 3-carboxy-3-hydroxy-4-methylpentanoate (2-isopropylmalate). The protein is 2-isopropylmalate synthase of Shewanella loihica (strain ATCC BAA-1088 / PV-4).